The primary structure comprises 353 residues: Photosystem II protein D1 (353 aa).

The residue at position 2 (Thr-2) is an N-acetylthreonine. A Phosphothreonine modification is found at Thr-2. A run of 3 helical transmembrane segments spans residues 29-46 (YIGW…TATS), 118-133 (HFLL…EWEL), and 142-156 (WIAV…AATA). Residue His-118 coordinates chlorophyll a. Residue Tyr-126 participates in pheophytin a binding. 2 residues coordinate [CaMn4O5] cluster: Asp-170 and Glu-189. Residues 197-218 (FHMLGVAGVFGGSLFSAMHGSL) form a helical membrane-spanning segment. His-198 is a binding site for chlorophyll a. Residues His-215 and 264-265 (SF) contribute to the a quinone site. His-215 provides a ligand contact to Fe cation. A Fe cation-binding site is contributed by His-272. The helical transmembrane segment at 274-288 (FLAAWPVVGIWFTAL) threads the bilayer. The [CaMn4O5] cluster site is built by His-332, Glu-333, Asp-342, and Ala-344. Residues 345–353 (AVEAPSTNG) constitute a propeptide that is removed on maturation.

Belongs to the reaction center PufL/M/PsbA/D family. In terms of assembly, PSII is composed of 1 copy each of membrane proteins PsbA, PsbB, PsbC, PsbD, PsbE, PsbF, PsbH, PsbI, PsbJ, PsbK, PsbL, PsbM, PsbT, PsbX, PsbY, PsbZ, Psb30/Ycf12, at least 3 peripheral proteins of the oxygen-evolving complex and a large number of cofactors. It forms dimeric complexes. The D1/D2 heterodimer binds P680, chlorophylls that are the primary electron donor of PSII, and subsequent electron acceptors. It shares a non-heme iron and each subunit binds pheophytin, quinone, additional chlorophylls, carotenoids and lipids. D1 provides most of the ligands for the Mn4-Ca-O5 cluster of the oxygen-evolving complex (OEC). There is also a Cl(-1) ion associated with D1 and D2, which is required for oxygen evolution. The PSII complex binds additional chlorophylls, carotenoids and specific lipids. is required as a cofactor. In terms of processing, tyr-161 forms a radical intermediate that is referred to as redox-active TyrZ, YZ or Y-Z. Post-translationally, C-terminally processed by CTPA; processing is essential to allow assembly of the oxygen-evolving complex and thus photosynthetic growth.

It localises to the plastid. The protein resides in the chloroplast thylakoid membrane. It catalyses the reaction 2 a plastoquinone + 4 hnu + 2 H2O = 2 a plastoquinol + O2. Photosystem II (PSII) is a light-driven water:plastoquinone oxidoreductase that uses light energy to abstract electrons from H(2)O, generating O(2) and a proton gradient subsequently used for ATP formation. It consists of a core antenna complex that captures photons, and an electron transfer chain that converts photonic excitation into a charge separation. The D1/D2 (PsbA/PsbD) reaction center heterodimer binds P680, the primary electron donor of PSII as well as several subsequent electron acceptors. This is Photosystem II protein D1 from Nymphaea alba (White water-lily).